Consider the following 667-residue polypeptide: Cyclin-dependent kinase 17 (667 aa).

Disordered stretches follow at residues 1–70 (MTAY…SSLN) and 85–184 (DSEY…LRKM). Composition is skewed to acidic residues over residues 99–111 (EDFD…EFED) and 119–144 (DEDD…ITPE). A compositionally biased stretch (polar residues) spans 151 to 164 (TGVTTQTTPPSNNT). Positions 328-609 (YEKLDKLGEG…AAEAVKHPFL (282 aa)) constitute a Protein kinase domain. ATP is bound by residues 334–342 (LGEGTYATV) and K357. Residue D449 is the Proton acceptor of the active site. Mg(2+) is bound by residues N454 and D467. A disordered region spans residues 642-667 (HHHSSRRHHRGTLVKDKYRMHSSHHT). Over residues 644 to 653 (HSSRRHHRGT) the composition is skewed to basic residues.

The protein belongs to the protein kinase superfamily. CMGC Ser/Thr protein kinase family. CDC2/CDKX subfamily. As to quaternary structure, interacts with cyy-1; the interaction is required to activate pct-1. Mg(2+) serves as cofactor.

The protein localises to the cytoplasm. Its subcellular location is the cell projection. The protein resides in the dendrite. It localises to the axon. The catalysed reaction is L-seryl-[protein] + ATP = O-phospho-L-seryl-[protein] + ADP + H(+). It carries out the reaction L-threonyl-[protein] + ATP = O-phospho-L-threonyl-[protein] + ADP + H(+). Serine/threonine-protein kinase, which, in association with cyy-1, regulates the trafficking of synaptic vesicles in the DA9 motor neuron and probably also in the DD motor neurons and in RIA interneurons. In terms of biological role, sufficient for synaptic vesicle trafficking in the DA9 motor neuron. The sequence is that of Cyclin-dependent kinase 17 from Caenorhabditis elegans.